The sequence spans 428 residues: Flotillin-2 (428 aa).

3 S-palmitoyl cysteine lipidation sites follow: cysteine 4, cysteine 19, and cysteine 20.

This sequence belongs to the band 7/mec-2 family. Flotillin subfamily. In terms of assembly, heterooligomeric complex of flotillins 1 and 2. Palmitoylation may be required for the formation of higher order complexes and for neurite outgrowth in cultured neural stem cells. Normally expressed in growing retinal exons of newly differentiated ganglion cells at the retinal margin. After optic nerve injury, expressed in all retinal ganglion cells and retinal axons. Also expressed in endothelial cells, spinal cord, larval and adult skin, muscle processes, thymus and gill macrophages.

It localises to the membrane. The protein resides in the endosome. Its function is as follows. May play a role in axon growth and regeneration. May be involved in epidermal cell adhesion and epidermal structure and function. The chain is Flotillin-2 (flot2) from Carassius auratus (Goldfish).